A 249-amino-acid polypeptide reads, in one-letter code: Aspartate/glutamate leucyltransferase (249 aa).

It belongs to the R-transferase family. Bpt subfamily.

The protein resides in the cytoplasm. It catalyses the reaction N-terminal L-glutamyl-[protein] + L-leucyl-tRNA(Leu) = N-terminal L-leucyl-L-glutamyl-[protein] + tRNA(Leu) + H(+). The catalysed reaction is N-terminal L-aspartyl-[protein] + L-leucyl-tRNA(Leu) = N-terminal L-leucyl-L-aspartyl-[protein] + tRNA(Leu) + H(+). In terms of biological role, functions in the N-end rule pathway of protein degradation where it conjugates Leu from its aminoacyl-tRNA to the N-termini of proteins containing an N-terminal aspartate or glutamate. This chain is Aspartate/glutamate leucyltransferase, found in Azorhizobium caulinodans (strain ATCC 43989 / DSM 5975 / JCM 20966 / LMG 6465 / NBRC 14845 / NCIMB 13405 / ORS 571).